The sequence spans 86 residues: Small ribosomal subunit protein bS20 (86 aa).

Residues 1–27 are disordered; that stretch reads MANNKSAKKRAIQAEKRRQHNASRRSM.

It belongs to the bacterial ribosomal protein bS20 family.

Its function is as follows. Binds directly to 16S ribosomal RNA. The sequence is that of Small ribosomal subunit protein bS20 from Vibrio cholerae serotype O1 (strain ATCC 39541 / Classical Ogawa 395 / O395).